The chain runs to 381 residues: 4-hydroxy-3-methylbut-2-en-1-yl diphosphate synthase (flavodoxin) (381 aa).

Residues Cys280, Cys283, Cys315, and Glu322 each coordinate [4Fe-4S] cluster.

It belongs to the IspG family. [4Fe-4S] cluster is required as a cofactor.

The enzyme catalyses (2E)-4-hydroxy-3-methylbut-2-enyl diphosphate + oxidized [flavodoxin] + H2O + 2 H(+) = 2-C-methyl-D-erythritol 2,4-cyclic diphosphate + reduced [flavodoxin]. It participates in isoprenoid biosynthesis; isopentenyl diphosphate biosynthesis via DXP pathway; isopentenyl diphosphate from 1-deoxy-D-xylulose 5-phosphate: step 5/6. In terms of biological role, converts 2C-methyl-D-erythritol 2,4-cyclodiphosphate (ME-2,4cPP) into 1-hydroxy-2-methyl-2-(E)-butenyl 4-diphosphate. This chain is 4-hydroxy-3-methylbut-2-en-1-yl diphosphate synthase (flavodoxin), found in Clavibacter sepedonicus (Clavibacter michiganensis subsp. sepedonicus).